The following is an 862-amino-acid chain: Dipeptidyl peptidase 9 (862 aa).

Residues serine 729, aspartate 807, and histidine 839 each act as charge relay system in the active site. Serine 729 provides a ligand contact to Val-boroPro.

Belongs to the peptidase S9B family. DPPIV subfamily. In terms of assembly, homodimer. Forms a ternary complex with NLRP1, composed of a DPP9 homodimer, one full-length NLRP1 protein, and one cleaved C-terminus of NLRP1 (NACHT, LRR and PYD domains-containing protein 1, C-terminus). Forms a ternary complex with CARD8, composed of a DPP9 homodimer, one full-length NLRP1 protein, and one cleaved C-terminus of CARD8 (Caspase recruitment domain-containing protein 8, C-terminus). In the ternary complex, only one subunit of the DPP9 homodimer is bound to NLRP1 or CARD8. In terms of tissue distribution, detected in kidney, skin, brain, thymus and liver (at protein level).

The protein localises to the cytoplasm. The protein resides in the cytosol. It catalyses the reaction Release of an N-terminal dipeptide, Xaa-Yaa-|-Zaa-, from a polypeptide, preferentially when Yaa is Pro, provided Zaa is neither Pro nor hydroxyproline.. Its activity is regulated as follows. Inhibited by the serine proteinase inhibitor 4-(2-aminoethyl)benzenesulphonyl fluoride (AEBSF), and by di-isopropylfluorophosphate. Inhibited by Val-boroPro (Talabostat, PT-100), a non-selective inhibitor, which triggers pyroptosis in monocytes and macrophages. Val-boroPro inhibits activity by binding to the active site, mimicking a substrate-bound state, thereby displacing the C-terminal fragment of NLRP1, leading to activation of the NLRP1 inflammasome. In contrast, Val-boroPro does not directly displaces CARD8: it acts by promoting degradation of the N-terminal part of CARD8, leading to indirect disruption of the ternary complex. Functionally, dipeptidyl peptidase that cleaves off N-terminal dipeptides from proteins having a Pro or Ala residue at position 2. Acts as a key inhibitor of caspase-1-dependent monocyte and macrophage pyroptosis in resting cells by preventing activation of NLRP1 and CARD8. Sequesters the cleaved C-terminal part of NLRP1 and CARD8, which respectively constitute the active part of the NLRP1 and CARD8 inflammasomes, in a ternary complex, thereby preventing their oligomerization and activation. The dipeptidyl peptidase activity is required to suppress NLRP1 and CARD8; however, neither NLRP1 nor CARD8 are bona fide substrates of DPP9, suggesting the existence of substrate(s) required for NLRP1 and CARD8 inhibition. The protein is Dipeptidyl peptidase 9 of Mus musculus (Mouse).